A 115-amino-acid chain; its full sequence is Migration and invasion enhancer 1 (115 aa).

Residue S2 is modified to N-acetylserine. Residues C30 and C33 are joined by a disulfide bond. C112 carries the S-geranylgeranyl cysteine lipid modification. The propeptide at 113 to 115 (VIL) is removed in mature form.

Belongs to the SelWTH family. In terms of assembly, interacts with GPX1. Isoprenylation facilitates association with the plasma membrane and enhances the migratory phenotype of cells by inducing increased filopodia formation. Widely expressed with highest levels in kidney followed by brain and testis.

The protein resides in the cytoplasm. Its subcellular location is the cytosol. It localises to the cell membrane. In terms of biological role, increases cell migration by inducing filopodia formation at the leading edge of migrating cells. Plays a role in regulation of apoptosis, possibly through control of CASP3. May be involved in a redox-related process. The sequence is that of Migration and invasion enhancer 1 (Mien1) from Mus musculus (Mouse).